Consider the following 652-residue polypeptide: MKKRIKELTDLLNRYRYDYYTKDAPSVSDSDYDKLYRELVTLEQSYPEYVLQDSPTQQVGGTILKGFEKYRHQYPLFSLQDAFSREELDAFDKRVKAEFPNATYLAELKIDGLSISLSYENGFLQVGATRGDGNIGENITENIKKIKDIPHQLSEPLTITVRGEAYMSRQSFKAINEARQENGETEFANPRNAAAGTLRQLDTAVVAKRELATFLYQEASPTARNQQNEVLAELADLGFSVNPYYQLTSSMDEIWDFIKTIEAKRDQLAYDIDGVVIKVNSLAMQEELGFTVKAPRWAIAYKFPAEEKEAEILSVDWTVGRTGVVTPTANLTPVQLAGTTVSRATLHNVDYIAEKDIRIGDTVIVYKAGDIIPAVLNVVMSKRNQQEVMLIPKLCPSCGSELVHFEDEVALRCINPLCPSLIQRSLEHFASRDAMNITGLGPAIVEKLFLAGFVHDVADIYQLTKENFMQLDGIKEKSADKLLAAIEASKSNSAEKLLFGLGIRHIGSKVSRLILEVYGDISALLTAKEEEIARIDGLGSTIAQSLTQYFEQKTAAILVDELKTAGVNMHYSGQKVNSDAALFGLTVVLTGKLNQLNRNEAKDKLEALGAKVTGSVSKKTDLVIAGSDAGSKLEKAKSLGIRIEDEDWLRQL.

NAD(+) contacts are provided by residues 29–33 (DSDYD), 78–79 (SL), and glutamate 107. Lysine 109 (N6-AMP-lysine intermediate) is an active-site residue. The NAD(+) site is built by arginine 130, glutamate 164, lysine 278, and lysine 302. Positions 395, 398, 413, and 418 each coordinate Zn(2+). Positions 577-652 (NSDAALFGLT…IEDEDWLRQL (76 aa)) constitute a BRCT domain.

It belongs to the NAD-dependent DNA ligase family. LigA subfamily. It depends on Mg(2+) as a cofactor. Mn(2+) is required as a cofactor.

The enzyme catalyses NAD(+) + (deoxyribonucleotide)n-3'-hydroxyl + 5'-phospho-(deoxyribonucleotide)m = (deoxyribonucleotide)n+m + AMP + beta-nicotinamide D-nucleotide.. DNA ligase that catalyzes the formation of phosphodiester linkages between 5'-phosphoryl and 3'-hydroxyl groups in double-stranded DNA using NAD as a coenzyme and as the energy source for the reaction. It is essential for DNA replication and repair of damaged DNA. In Streptococcus pyogenes serotype M49 (strain NZ131), this protein is DNA ligase.